Consider the following 429-residue polypeptide: Patatin-like phospholipase domain-containing protein 5 (429 aa).

Residues 12–181 (LSFSGAGYLG…SNNLPFADCP (170 aa)) form the PNPLA domain. Positions 16 to 21 (GAGYLG) match the GXGXXG motif. A GXSXG motif is present at residues 47–51 (GSSSG). The active-site Nucleophile is the serine 49. Aspartate 168 serves as the catalytic Proton acceptor. The DGA/G motif lies at 168-170 (DGA).

As to expression, expressed in brain and pituitary gland.

It carries out the reaction a triacylglycerol + H2O = a diacylglycerol + a fatty acid + H(+). Functionally, has abundant triacylglycerol lipase activity. In Homo sapiens (Human), this protein is Patatin-like phospholipase domain-containing protein 5.